The following is a 281-amino-acid chain: Bifunctional protein FolD (281 aa).

NADP(+) contacts are provided by residues 164–166 (GRS) and Ser189.

Belongs to the tetrahydrofolate dehydrogenase/cyclohydrolase family. Homodimer.

It carries out the reaction (6R)-5,10-methylene-5,6,7,8-tetrahydrofolate + NADP(+) = (6R)-5,10-methenyltetrahydrofolate + NADPH. The catalysed reaction is (6R)-5,10-methenyltetrahydrofolate + H2O = (6R)-10-formyltetrahydrofolate + H(+). It participates in one-carbon metabolism; tetrahydrofolate interconversion. Functionally, catalyzes the oxidation of 5,10-methylenetetrahydrofolate to 5,10-methenyltetrahydrofolate and then the hydrolysis of 5,10-methenyltetrahydrofolate to 10-formyltetrahydrofolate. This is Bifunctional protein FolD from Enterococcus faecalis (strain ATCC 700802 / V583).